A 616-amino-acid polypeptide reads, in one-letter code: tRNA 5-methylaminomethyl-2-thiouridine biosynthesis bifunctional protein MnmC (616 aa).

The segment at 1–232 (MLRTIVPARL…KRHCMSARFA (232 aa)) is tRNA (mnm(5)s(2)U34)-methyltransferase. The tract at residues 249–616 (IGGGVAGAAA…ARFAGNRKTA (368 aa)) is FAD-dependent cmnm(5)s(2)U34 oxidoreductase.

This sequence in the N-terminal section; belongs to the methyltransferase superfamily. tRNA (mnm(5)s(2)U34)-methyltransferase family. In the C-terminal section; belongs to the DAO family. It depends on FAD as a cofactor.

The protein resides in the cytoplasm. The catalysed reaction is 5-aminomethyl-2-thiouridine(34) in tRNA + S-adenosyl-L-methionine = 5-methylaminomethyl-2-thiouridine(34) in tRNA + S-adenosyl-L-homocysteine + H(+). Its function is as follows. Catalyzes the last two steps in the biosynthesis of 5-methylaminomethyl-2-thiouridine (mnm(5)s(2)U) at the wobble position (U34) in tRNA. Catalyzes the FAD-dependent demodification of cmnm(5)s(2)U34 to nm(5)s(2)U34, followed by the transfer of a methyl group from S-adenosyl-L-methionine to nm(5)s(2)U34, to form mnm(5)s(2)U34. In Thiobacillus denitrificans (strain ATCC 25259 / T1), this protein is tRNA 5-methylaminomethyl-2-thiouridine biosynthesis bifunctional protein MnmC.